Reading from the N-terminus, the 571-residue chain is Acetolactate synthase large subunit (571 aa).

Glutamate 51 is a binding site for thiamine diphosphate. Residues arginine 153, 261–282, and 304–323 each bind FAD; these read HGTY…IGVR and DIDP…IVGD. Residues 394–474 form a thiamine pyrophosphate binding region; that stretch reads QHQMFTALYY…VLILNLNNSS (81 aa). 2 residues coordinate Mg(2+): aspartate 445 and asparagine 472.

The protein belongs to the TPP enzyme family. As to quaternary structure, dimer of large and small chains. Mg(2+) is required as a cofactor. The cofactor is thiamine diphosphate.

The enzyme catalyses 2 pyruvate + H(+) = (2S)-2-acetolactate + CO2. It functions in the pathway amino-acid biosynthesis; L-isoleucine biosynthesis; L-isoleucine from 2-oxobutanoate: step 1/4. It participates in amino-acid biosynthesis; L-valine biosynthesis; L-valine from pyruvate: step 1/4. This Buchnera aphidicola subsp. Acyrthosiphon pisum (strain APS) (Acyrthosiphon pisum symbiotic bacterium) protein is Acetolactate synthase large subunit (ilvI).